A 258-amino-acid chain; its full sequence is Snake venom serine protease BPA (258 aa).

The signal sequence occupies residues 1 to 18 (MVLIRVIANLLILQLSNA). The propeptide occupies 19–24 (QKSSEL). Positions 25 to 249 (VIGGDECNIT…YLPWIQSIIA (225 aa)) constitute a Peptidase S1 domain. 6 disulfide bridges follow: Cys-31-Cys-163, Cys-50-Cys-66, Cys-98-Cys-256, Cys-142-Cys-210, Cys-174-Cys-189, and Cys-200-Cys-225. 2 N-linked (GlcNAc...) asparagine glycosylation sites follow: Asn-32 and Asn-44. The active-site Charge relay system is the His-65. Residue Asn-103 is glycosylated (N-linked (GlcNAc...) asparagine). The active-site Charge relay system is Asp-110. Asn-121 carries an N-linked (GlcNAc...) asparagine glycan. Ser-133 is a glycosylation site (O-linked (GalNAc...) serine). N-linked (GlcNAc...) asparagine glycans are attached at residues Asn-154 and Asn-170. The active-site Charge relay system is Ser-204. N-linked (GlcNAc...) asparagine glycosylation is found at Asn-211 and Asn-251. O-linked (GalNAc...) threonine glycosylation is present at Thr-255.

This sequence belongs to the peptidase S1 family. Snake venom subfamily. Monomer. Post-translationally, N- and O-glycosylated. The glycosylation has a stabilizing effect on the protein. However, the removal of part of the carbohydrates enhances the proteolytic activity of the SVSP towards human and rat fibrinogen. Expressed by the venom gland.

The protein resides in the secreted. Its activity is regulated as follows. Inhibited by diisopropylfluorophosphate (DFP), but not by SBTI, Antithrombin III/heparin and BPTI, probably due to steric hindrance caused by its huge carbohydrate moietie. Functionally, snake venom serine protease that has a potent and selective fibrinogenolytic activity. Preferentially cleaves the alpha-chain (FGA) of human and rat fibrinogen at Arg-|-Gly bonds, and slowly digests the beta-chain (FGB). In vivo, completely avoids thrombus formation induced in rat, decreases the fibrinogen plasma level and prolonges the recalcification time. Possesses esterolytic and amidolytic activities. This chain is Snake venom serine protease BPA, found in Bothrops jararaca (Jararaca).